A 716-amino-acid polypeptide reads, in one-letter code: MIYQSPTIQVELLEDNIAKLCFNAPGSVNKFDRETLASLDAALDSIKQDSNIKALVLTSSKDTFIVGADITEFLGLFAQDDAVLLSWVEQANAVFNKLEDLPFPTASAIKGFALGGGCETILATDFRIADTTAKIGLPETKLGIIPGFGGTVRLPRVIGADNALEWITTGKDQRAEDALKVGAVDSVVAPQALEAAAIQMLKDAVAEKLDWQARRNRKLSALTLPKLEAMMSFTTAKGMVFAVAGKHYPAPMAAVSVIEQASTKGRAEALQIEHQAFIKLAKTDVAKALIGIFLNDQFVKGKAKKAGKLAKEVNNAAVLGAGIMGGGIAYQSASKGTPIVMKDIAQPALDLGLNEAAKLLSAQVARGRSTPEKMAKVLNNITPSLDYAAIKHSDVVVEAVVEHPKIKAQVLAEVEGYVSEDAIIASNTSTISINLLAKSMKKPERFCGMHFFNPVHKMPLVEVIRGEHSSEETIASVVAYASKMGKTPIVVNDCPGFFVNRVLFPYFAGFNGLLAEGGDFAAIDKVMEKQFGWPMGPAYLLDVVGLDTGHHAQAVMAEGFPDRMGKSGTDAIDVMFENKRLGQKNGKGFYVYSVDSRGKPKKDVDPTSYGLLKDAFGELKAFEADDIIARTMIPMIIETVRCLEEGIVASPAEADMGLVYGLGFPPFRGGVFRYLDTMGVANFVALADKYAHLGGLYQVTDAMRTLAANNGSYYQA.

Residues 1–189 (MIYQSPTIQV…KVGAVDSVVA (189 aa)) form an enoyl-CoA hydratase/isomerase region. A substrate-binding site is contributed by Asp-296. Residues 311–716 (KEVNNAAVLG…AANNGSYYQA (406 aa)) form a 3-hydroxyacyl-CoA dehydrogenase region. NAD(+)-binding positions include Met-324, Asp-343, 400–402 (VVE), Lys-407, and Ser-429. The For 3-hydroxyacyl-CoA dehydrogenase activity role is filled by His-450. Residue Asn-453 coordinates NAD(+). Positions 500 and 660 each coordinate substrate.

This sequence in the N-terminal section; belongs to the enoyl-CoA hydratase/isomerase family. In the C-terminal section; belongs to the 3-hydroxyacyl-CoA dehydrogenase family. In terms of assembly, heterotetramer of two alpha chains (FadB) and two beta chains (FadA).

It catalyses the reaction a (3S)-3-hydroxyacyl-CoA + NAD(+) = a 3-oxoacyl-CoA + NADH + H(+). The catalysed reaction is a (3S)-3-hydroxyacyl-CoA = a (2E)-enoyl-CoA + H2O. The enzyme catalyses a 4-saturated-(3S)-3-hydroxyacyl-CoA = a (3E)-enoyl-CoA + H2O. It carries out the reaction (3S)-3-hydroxybutanoyl-CoA = (3R)-3-hydroxybutanoyl-CoA. It catalyses the reaction a (3Z)-enoyl-CoA = a 4-saturated (2E)-enoyl-CoA. The catalysed reaction is a (3E)-enoyl-CoA = a 4-saturated (2E)-enoyl-CoA. Its pathway is lipid metabolism; fatty acid beta-oxidation. Its function is as follows. Involved in the aerobic and anaerobic degradation of long-chain fatty acids via beta-oxidation cycle. Catalyzes the formation of 3-oxoacyl-CoA from enoyl-CoA via L-3-hydroxyacyl-CoA. It can also use D-3-hydroxyacyl-CoA and cis-3-enoyl-CoA as substrate. The polypeptide is Fatty acid oxidation complex subunit alpha (Shewanella baltica (strain OS185)).